A 300-amino-acid polypeptide reads, in one-letter code: Bifunctional protein FolD 2 (300 aa).

Residues 166–168 (GRS), Ser191, and Ile232 contribute to the NADP(+) site.

Belongs to the tetrahydrofolate dehydrogenase/cyclohydrolase family. Homodimer.

It catalyses the reaction (6R)-5,10-methylene-5,6,7,8-tetrahydrofolate + NADP(+) = (6R)-5,10-methenyltetrahydrofolate + NADPH. The enzyme catalyses (6R)-5,10-methenyltetrahydrofolate + H2O = (6R)-10-formyltetrahydrofolate + H(+). The protein operates within one-carbon metabolism; tetrahydrofolate interconversion. Its function is as follows. Catalyzes the oxidation of 5,10-methylenetetrahydrofolate to 5,10-methenyltetrahydrofolate and then the hydrolysis of 5,10-methenyltetrahydrofolate to 10-formyltetrahydrofolate. This Roseobacter denitrificans (strain ATCC 33942 / OCh 114) (Erythrobacter sp. (strain OCh 114)) protein is Bifunctional protein FolD 2.